Here is an 809-residue protein sequence, read N- to C-terminus: ATP-dependent RNA helicase HrpB (809 aa).

Positions 14-177 (LTALDCAPQV…LPEAPVVISE (164 aa)) constitute a Helicase ATP-binding domain. ATP is bound at residue 27 to 34 (APTGAGKS). The DEFH box motif lies at 123 to 126 (DEFH). The region spanning 195–368 (RFDDAVAVAT…GLLMELLQWG (174 aa)) is the Helicase C-terminal domain. Residues 788 to 809 (PKHVWPDDPANTAPTRRTKKYS) form a disordered region.

Belongs to the DEAD box helicase family.

The catalysed reaction is ATP + H2O = ADP + phosphate + H(+). The sequence is that of ATP-dependent RNA helicase HrpB (hrpB) from Escherichia coli (strain K12).